The chain runs to 440 residues: Thymidine phosphorylase (440 aa).

Belongs to the thymidine/pyrimidine-nucleoside phosphorylase family. In terms of assembly, homodimer.

It carries out the reaction thymidine + phosphate = 2-deoxy-alpha-D-ribose 1-phosphate + thymine. It participates in pyrimidine metabolism; dTMP biosynthesis via salvage pathway; dTMP from thymine: step 1/2. Functionally, the enzymes which catalyze the reversible phosphorolysis of pyrimidine nucleosides are involved in the degradation of these compounds and in their utilization as carbon and energy sources, or in the rescue of pyrimidine bases for nucleotide synthesis. This Salmonella agona (strain SL483) protein is Thymidine phosphorylase.